Consider the following 260-residue polypeptide: Fibronectin type III domain-containing protein 5 (260 aa).

The disordered stretch occupies residues M1–A56. Positions R10–P28 are enriched in basic and acidic residues. A compositionally biased stretch (low complexity) spans P29–A56. The 92-residue stretch at A84–E175 folds into the Fibronectin type-III domain. Residues N87 and N132 are each glycosylated (N-linked (GlcNAc...) asparagine). Residues G201 to C221 form a helical membrane-spanning segment. The span at N230 to S241 shows a compositional bias: basic and acidic residues. A disordered region spans residues N230 to I260. Over residues Q251–I260 the composition is skewed to gly residues. The short motif at S258–I260 is the Microbody targeting signal element.

As to quaternary structure, dimer; may exist in other oligomeric forms. Post-translationally, the extracellular domain is cleaved and released from the cell membrane. In terms of processing, N-Glycosylated. As to expression, widely expressed, with highest levels in heart. Very low expression, if any, in colon, pancreas and spleen.

It localises to the cell membrane. The protein localises to the peroxisome membrane. The protein resides in the secreted. Functionally, mediates beneficial effects of muscular exercise. Induces browning of white adipose tissue by stimulating UCP1 expression, at least in part, via the nuclear receptor PPARA. The sequence is that of Fibronectin type III domain-containing protein 5 (FNDC5) from Homo sapiens (Human).